A 212-amino-acid chain; its full sequence is 3-oxo-tetronate 4-phosphate decarboxylase (212 aa).

E79 serves as the catalytic Proton acceptor. The Zn(2+) site is built by E79, H98, and H100. Y125 serves as the catalytic Proton donor. H165 contacts Zn(2+).

It belongs to the aldolase class II family. AraD/FucA subfamily. Zn(2+) serves as cofactor.

The enzyme catalyses 3-dehydro-4-O-phospho-D-erythronate + H(+) = dihydroxyacetone phosphate + CO2. It catalyses the reaction 3-dehydro-4-O-phospho-L-erythronate + H(+) = dihydroxyacetone phosphate + CO2. In terms of biological role, catalyzes the decarboxylation of 3-oxo-tetronate 4-phosphate to dihydroxyacetone phosphate (DHAP) and CO(2). This chain is 3-oxo-tetronate 4-phosphate decarboxylase, found in Escherichia coli (strain K12).